The sequence spans 311 residues: MQAPPPEHCPGVESEQAGQVSACAGCPNQSICSDPNKKREDPGKALVAAALKDVKHKLLILSGKGGVGKSTVTTLLTRYLARSYPDSNFGVLDIDICGPSQPRLMGALGENVHQSGSGWSPVGIDDNVCLMSIGFLLGSVDDAIIWRGPKKNGMIRQFLSEVDWGNLDLLLLDTPPGTSDEHLSVVSYLKDDSSPDSVHAIIVTTPQEVALLDVRKEINFCKKQQIPIVGVIENMSGFQCGHCGHSSEIFPAKTGGAAAMCAEMEVPLLGSLPLDPAIAKACDAGEDITSVKNPTTEALEGICSKIMSSFN.

Cys-9, Cys-23, Cys-26, and Cys-32 together coordinate [4Fe-4S] cluster. An ATP-binding site is contributed by 63-70 (GKGGVGKS). Residues Cys-240 and Cys-243 each contribute to the [4Fe-4S] cluster site.

Belongs to the Mrp/NBP35 ATP-binding proteins family. NUBP1/NBP35 subfamily. In terms of assembly, heterotetramer of 2 Nubp1 and 2 Nubp2 chains. [4Fe-4S] cluster serves as cofactor.

The protein resides in the cytoplasm. In terms of biological role, component of the cytosolic iron-sulfur (Fe/S) protein assembly (CIA) machinery. Required for maturation of extramitochondrial Fe-S proteins. The Nubp1-Nubp2 heterotetramer forms a Fe-S scaffold complex, mediating the de novo assembly of an Fe-S cluster and its transfer to target apoproteins. In Drosophila pseudoobscura pseudoobscura (Fruit fly), this protein is Cytosolic Fe-S cluster assembly factor Nubp1 homolog.